Reading from the N-terminus, the 229-residue chain is Ras-related protein Rab-33B (229 aa).

N43, V44, G45, K46, T47, C48, T62, and T65 together coordinate GTP. Residue T47 coordinates Mg(2+). A Switch 1 motif is present at residues G56–V68. Positions 65 and 88 each coordinate Mg(2+). The Switch 2 motif lies at T89–H108. GTP contacts are provided by G91, N148, K149, D151, A179, and K180. S-geranylgeranyl cysteine attachment occurs at residues C227 and C229. Residue C229 is modified to Cysteine methyl ester.

It belongs to the small GTPase superfamily. Rab family. Interacts (GTP- and GDP-bound forms) with ATG16L1; the complex consists of a tetramer where two RAB33B molecules bind independently one molecule of the ATG16L1 homodimer; the interaction promotes ATG12-ATG5-ATG16L1 complex recruitment to phagophores. Interacts with ATG16L2; however interaction is approximately hundred times lower than for ATG16L1. Interacts with RIC1 (via C-terminus domain); the interaction is direct with a preference for RAB33B-GTP. Interacts with RGP1. Mg(2+) is required as a cofactor. Prenylated.

The protein localises to the golgi apparatus membrane. It localises to the golgi apparatus. The protein resides in the cis-Golgi network. It is found in the preautophagosomal structure membrane. The catalysed reaction is GTP + H2O = GDP + phosphate + H(+). Regulated by guanine nucleotide exchange factors (GEFs) which promote the exchange of bound GDP for free GTP. Regulated by GTPase activating proteins (GAPs) such as SGSM2 which increase the GTP hydrolysis activity. Inhibited by GDP dissociation inhibitors (GDIs). The small GTPases Rab are key regulators of intracellular membrane trafficking, from the formation of transport vesicles to their fusion with membranes. Rabs cycle between an inactive GDP-bound form and an active GTP-bound form that is able to recruit to membranes different sets of downstream effectors directly responsible for vesicle formation, movement, tethering and fusion. RAB33B acts, in coordination with RAB6A, to regulate intra-Golgi retrograde trafficking. Participates in autophagosome formation by recruiting the ATG12-ATG5-ATG16L1 complex to phagophores, probably in a nucleotide-independent manner. This Pongo abelii (Sumatran orangutan) protein is Ras-related protein Rab-33B (RAB33B).